The following is a 102-amino-acid chain: Protamine-2 (102 aa).

The disordered stretch occupies residues 1 to 102; sequence MVRYRMRSLS…RTRRRRCRRH (102 aa). A phosphoserine mark is found at S8 and S10. The span at 8-17 shows a compositional bias: basic and acidic residues; the sequence is SLSERSHEVH. Residues 18–29 are compositionally biased toward low complexity; it reads GQQVHGQDQGHN. The segment covering 39 to 48 has biased composition (basic and acidic residues); the sequence is EHVEVYERTH. The segment covering 49–102 has biased composition (basic residues); that stretch reads GHSHYRRRHCSRRRLHRIHRRRHRSCRRRRRRSCRHRRRHRRGCRTRRRRCRRH.

The protein belongs to the protamine P2 family. Interacts with TDRP. In terms of processing, proteolytic processing into mature chains is required for histone eviction during spermatogenesis. Transition proteins (TNP1 and TNP2) are required for processing. Testis.

It localises to the nucleus. Its subcellular location is the chromosome. Functionally, protamines substitute for histones in the chromatin of sperm during the haploid phase of spermatogenesis. They compact sperm DNA into a highly condensed, stable and inactive complex. The sequence is that of Protamine-2 (PRM2) from Macaca mulatta (Rhesus macaque).